The chain runs to 574 residues: DNA polymerase alpha subunit B (574 aa).

Belongs to the DNA polymerase alpha subunit B family. Component of the alpha DNA polymerase complex (also known as the alpha DNA polymerase-primase complex) consisting of four subunits: the catalytic subunit pol1, the accessory subunit spb70/pol12, and the primase complex subunits spp1/pri1 and spp2/pri2 respectively. Interacts with orc1. Interacts with orc2; the interaction occurs on the chromatin, is stable thoughout the cell cycle and is independent from spb70 role in the alpha DNA polymerase complex. Post-translationally, phosphorylated in a cell cycle-dependent manner.

The protein resides in the nucleus. It is found in the chromosome. Functionally, accessory subunit of the DNA polymerase alpha complex (also known as the alpha DNA polymerase-primase complex) which plays an essential role in the initiation of DNA synthesis. During the S phase of the cell cycle, the DNA polymerase alpha complex (composed of a catalytic subunit pol1, an accessory subunit spb70/pol12 and two primase subunits, the catalytic subunit spp1/pri1 and the regulatory subunit spp2/pri2) is recruited to DNA at the replicative forks. The primase subunit of the polymerase alpha complex initiates DNA synthesis by oligomerising short RNA primers on both leading and lagging strands. The polypeptide is DNA polymerase alpha subunit B (Schizosaccharomyces pombe (strain 972 / ATCC 24843) (Fission yeast)).